Reading from the N-terminus, the 532-residue chain is CTP synthase (532 aa).

The amidoligase domain stretch occupies residues Met1–Leu267. Ser13 serves as a coordination point for CTP. Position 13 (Ser13) interacts with UTP. Ser14–Ile19 lines the ATP pocket. An L-glutamine-binding site is contributed by Tyr54. Asp71 serves as a coordination point for ATP. Residues Asp71 and Glu141 each contribute to the Mg(2+) site. Residues Asp148–Glu150, Lys188–Gln193, and Lys224 contribute to the CTP site. UTP contacts are provided by residues Lys188–Gln193 and Lys224. A Glutamine amidotransferase type-1 domain is found at Arg292–Lys532. Residue Gly354 participates in L-glutamine binding. Cys381 (nucleophile; for glutamine hydrolysis) is an active-site residue. L-glutamine is bound by residues Leu382–Gln385, Glu405, and Arg462. Catalysis depends on residues His507 and Glu509.

It belongs to the CTP synthase family. In terms of assembly, homotetramer.

It catalyses the reaction UTP + L-glutamine + ATP + H2O = CTP + L-glutamate + ADP + phosphate + 2 H(+). The enzyme catalyses L-glutamine + H2O = L-glutamate + NH4(+). The catalysed reaction is UTP + NH4(+) + ATP = CTP + ADP + phosphate + 2 H(+). It participates in pyrimidine metabolism; CTP biosynthesis via de novo pathway; CTP from UDP: step 2/2. Its activity is regulated as follows. Allosterically activated by GTP, when glutamine is the substrate; GTP has no effect on the reaction when ammonia is the substrate. The allosteric effector GTP functions by stabilizing the protein conformation that binds the tetrahedral intermediate(s) formed during glutamine hydrolysis. Inhibited by the product CTP, via allosteric rather than competitive inhibition. Functionally, catalyzes the ATP-dependent amination of UTP to CTP with either L-glutamine or ammonia as the source of nitrogen. Regulates intracellular CTP levels through interactions with the four ribonucleotide triphosphates. The protein is CTP synthase of Listeria innocua serovar 6a (strain ATCC BAA-680 / CLIP 11262).